A 386-amino-acid chain; its full sequence is uncharacterized protein (386 aa).

The next 12 membrane-spanning stretches (helical) occupy residues 8 to 28, 43 to 63, 79 to 99, 102 to 122, 134 to 154, 156 to 176, 216 to 236, 241 to 261, 272 to 292, 297 to 317, 342 to 362, and 365 to 385; these read VFVI…IAPI, IGLI…PVGV, FFYG…GFLI, IFTG…IAAI, IFNS…GILA, MYGI…AAII, FIIN…LALY, NITI…MALL, LGNI…YLLS, FLTI…SSTA, INIG…ILGI, and MYKF…LRIE.

The protein belongs to the major facilitator superfamily.

The protein resides in the cell membrane. This is an uncharacterized protein from Methanocaldococcus jannaschii (strain ATCC 43067 / DSM 2661 / JAL-1 / JCM 10045 / NBRC 100440) (Methanococcus jannaschii).